The sequence spans 204 residues: Holliday junction branch migration complex subunit RuvA (204 aa).

The interval 1–64 (MIGRLRGVVI…EDAQLLYGFN (64 aa)) is domain I. A domain II region spans residues 65-143 (HKQERALFRE…GWVSHDLFSP (79 aa)). Residues 144 to 155 (AEISLPARESVL) form a flexible linker region. The domain III stretch occupies residues 156–204 (RAPDSSEEAASALVALGYKPQQASQIVSKIAKEGMSVEDIIRESLRSLV).

Belongs to the RuvA family. In terms of assembly, homotetramer. Forms an RuvA(8)-RuvB(12)-Holliday junction (HJ) complex. HJ DNA is sandwiched between 2 RuvA tetramers; dsDNA enters through RuvA and exits via RuvB. An RuvB hexamer assembles on each DNA strand where it exits the tetramer. Each RuvB hexamer is contacted by two RuvA subunits (via domain III) on 2 adjacent RuvB subunits; this complex drives branch migration. In the full resolvosome a probable DNA-RuvA(4)-RuvB(12)-RuvC(2) complex forms which resolves the HJ.

It is found in the cytoplasm. Functionally, the RuvA-RuvB-RuvC complex processes Holliday junction (HJ) DNA during genetic recombination and DNA repair, while the RuvA-RuvB complex plays an important role in the rescue of blocked DNA replication forks via replication fork reversal (RFR). RuvA specifically binds to HJ cruciform DNA, conferring on it an open structure. The RuvB hexamer acts as an ATP-dependent pump, pulling dsDNA into and through the RuvAB complex. HJ branch migration allows RuvC to scan DNA until it finds its consensus sequence, where it cleaves and resolves the cruciform DNA. This Aeromonas salmonicida (strain A449) protein is Holliday junction branch migration complex subunit RuvA.